Consider the following 661-residue polypeptide: Peroxisomal acyl-coenzyme A oxidase 1 (661 aa).

Lys89 and Lys90 each carry N6-succinyllysine. Thr139 lines the FAD pocket. Lys159 is modified (N6-succinyllysine). Gly178 is an FAD binding site. Residue Lys216 is modified to N6-acetyllysine. Lys241 carries the post-translational modification N6-succinyllysine. 3 positions are modified to N6-acetyllysine: Lys255, Lys267, and Lys272. Lys349 carries the N6-succinyllysine modification. Glu421 serves as the catalytic Proton acceptor. An N6-acetyllysine; alternate mark is found at Lys437, Lys446, Lys512, and Lys637. 4 positions are modified to N6-succinyllysine; alternate: Lys437, Lys446, Lys512, and Lys637. An N6-succinyllysine modification is found at Lys643. Ser649 carries the post-translational modification Phosphoserine. N6-acetyllysine is present on Lys652. Lys655 carries the N6-succinyllysine modification. The Microbody targeting signal signature appears at 659–661 (SKL).

Belongs to the acyl-CoA oxidase family. In terms of assembly, homodimer. Interacts with LONP2. It depends on FAD as a cofactor.

It is found in the peroxisome. It carries out the reaction a 2,3-saturated acyl-CoA + O2 = a (2E)-enoyl-CoA + H2O2. It catalyses the reaction hexadecanoyl-CoA + O2 = (2E)-hexadecenoyl-CoA + H2O2. The enzyme catalyses dodecanoyl-CoA + O2 = (2E)-dodecenoyl-CoA + H2O2. The catalysed reaction is octanoyl-CoA + O2 = (2E)-octenoyl-CoA + H2O2. It carries out the reaction decanoyl-CoA + O2 = (2E)-decenoyl-CoA + H2O2. It catalyses the reaction tetradecanoyl-CoA + O2 = (2E)-tetradecenoyl-CoA + H2O2. The enzyme catalyses hexadecanedioyl-CoA + O2 = (2E)-hexadecenedioyl-CoA + H2O2. The catalysed reaction is tetracosanoyl-CoA + O2 = (2E)-tetracosenoyl-CoA + H2O2. It carries out the reaction glutaryl-CoA + O2 = (2E)-glutaconyl-CoA + H2O2. It catalyses the reaction hexanoyl-CoA + O2 = (2E)-hexenoyl-CoA + H2O2. The enzyme catalyses octadecanoyl-CoA + O2 = (2E)-octadecenoyl-CoA + H2O2. The catalysed reaction is (5Z,8Z,11Z,14Z,17Z)-eicosapentaenoyl-CoA + O2 = (2E,5Z,8Z,11Z,14Z,17Z)-icosahexaenoyl-CoA + H2O2. It carries out the reaction (6Z,9Z,12Z,15Z,18Z,21Z)-tetracosahexaenoyl-CoA + O2 = (2E,6Z,9Z,12Z,15Z,18Z,21Z)-tetracosaheptaenoyl-CoA + H2O2. The protein operates within lipid metabolism; peroxisomal fatty acid beta-oxidation. Functionally, involved in the initial and rate-limiting step of peroxisomal beta-oxidation of straight-chain saturated and unsaturated very-long-chain fatty acids. Catalyzes the desaturation of fatty acyl-CoAs such as palmitoyl-CoA (hexadecanoyl-CoA) to 2-trans-enoyl-CoAs ((2E)-enoyl-CoAs) such as (2E)-hexadecenoyl-CoA, and donates electrons directly to molecular oxygen (O(2)), thereby producing hydrogen peroxide (H(2)O(2)). Isoform 2 shows higher activity with hexadecanoyl-CoA as substrate than isoform 1. The polypeptide is Peroxisomal acyl-coenzyme A oxidase 1 (ACOX1) (Phascolarctos cinereus (Koala)).